The sequence spans 123 residues: Large ribosomal subunit protein bL12 (123 aa).

The residue at position 84 (Lys-84) is an N6-methyllysine. Positions 94 to 123 are disordered; that stretch reads PATLKEGMSKEDGDEAKTKLEEAGASVELK. Positions 100 to 115 are enriched in basic and acidic residues; sequence GMSKEDGDEAKTKLEE.

The protein belongs to the bacterial ribosomal protein bL12 family. In terms of assembly, homodimer. Part of the ribosomal stalk of the 50S ribosomal subunit. Forms a multimeric L10(L12)X complex, where L10 forms an elongated spine to which 2 to 4 L12 dimers bind in a sequential fashion. Binds GTP-bound translation factors.

Its function is as follows. Seems to be the binding site for several of the factors involved in protein synthesis and appears to be essential for accurate translation. In terms of biological role, forms part of the ribosomal stalk which helps the ribosome interact with GTP-bound translation factors. Is thus essential for accurate translation. This is Large ribosomal subunit protein bL12 from Halophilic eubacterium NRCC 41227.